The sequence spans 439 residues: MIKATDRKLVVGLEIGTAKVAALVGEVLPDGMVNIIGVGSCPSRGMDKGGVNDLESVVKCVQRAIDQAELMADCQISSVYLALSGKHISCQNEIGMVPISEEEVTQEDVENVVHTAKSVRVRDEHRVLHVIPQEYAIDYQEGIKNPVGLSGVRMQAKVHLITCHNDMAKNIVKAVERCGLKVDQLIFAGLASSYSVLTEDERELGVCVVDIGGGTMDIAVYTGGALRHTKVIPYAGNVVTSDIAYAFGTPPSDAEAIKVRHGCALGSIVGKDESVEVPSVGGRPPRSLQRQTLAEVIEPRYTELLNLVNEEILQLQEKLRQQGVKHHLAAGIVLTGGAAQIEGLAACAQRVFHTQVRIGAPLNITGLTDYAQEPYYSTAVGLLHYGKESHLNGEAEVEKRVTASVGSWIKRLNSWLRKEFDANGLINGDRPIRBCEECA.

It belongs to the FtsA/MreB family. Self-interacts. Interacts with FtsZ.

It is found in the cell inner membrane. In terms of biological role, cell division protein that is involved in the assembly of the Z ring. May serve as a membrane anchor for the Z ring. The polypeptide is Cell division protein FtsA (Shigella flexneri).